The sequence spans 176 residues: Large ribosomal subunit protein uL6 (176 aa).

This sequence belongs to the universal ribosomal protein uL6 family. As to quaternary structure, part of the 50S ribosomal subunit.

Functionally, this protein binds to the 23S rRNA, and is important in its secondary structure. It is located near the subunit interface in the base of the L7/L12 stalk, and near the tRNA binding site of the peptidyltransferase center. This Thiobacillus denitrificans (strain ATCC 25259 / T1) protein is Large ribosomal subunit protein uL6.